Here is a 236-residue protein sequence, read N- to C-terminus: Biosynthetic peptidoglycan transglycosylase (236 aa).

Residues Ala12–Pro31 traverse the membrane as a helical segment.

The protein belongs to the glycosyltransferase 51 family.

The protein resides in the cell inner membrane. It carries out the reaction [GlcNAc-(1-&gt;4)-Mur2Ac(oyl-L-Ala-gamma-D-Glu-L-Lys-D-Ala-D-Ala)](n)-di-trans,octa-cis-undecaprenyl diphosphate + beta-D-GlcNAc-(1-&gt;4)-Mur2Ac(oyl-L-Ala-gamma-D-Glu-L-Lys-D-Ala-D-Ala)-di-trans,octa-cis-undecaprenyl diphosphate = [GlcNAc-(1-&gt;4)-Mur2Ac(oyl-L-Ala-gamma-D-Glu-L-Lys-D-Ala-D-Ala)](n+1)-di-trans,octa-cis-undecaprenyl diphosphate + di-trans,octa-cis-undecaprenyl diphosphate + H(+). It participates in cell wall biogenesis; peptidoglycan biosynthesis. In terms of biological role, peptidoglycan polymerase that catalyzes glycan chain elongation from lipid-linked precursors. In Pseudomonas putida (strain W619), this protein is Biosynthetic peptidoglycan transglycosylase.